Here is a 192-residue protein sequence, read N- to C-terminus: MENRWQVMIVWQVDRMRINTWKSLVKYHMHISKKAKGWFYRHHFESRHPKISSEVHIPLETAELVITTYWGLLPGEREWHLGQGVSIEWRQGRYRTQIDPGLADQLIHIYYFDCFSESAIRKAILGHKISPRCNYQAGHNKVGSLQYLALTALIAPKKTKPPLPSVQKLVEDRWNKPQKTRGHRESHTMNGH.

Residues 14–17 are interaction with host APOBEC3F; F1-box; the sequence is DRMR. The interaction with host APOBEC3G; G-box stretch occupies residues 40–44; it reads YRHHF. Positions 54-72 are interaction with host APOBEC3F and APOBEC3G; FG-box; sequence EVHIPLETAELVITTYWGL. Residues 74 to 79 are interaction with host APOBEC3F; F2-box; it reads PGEREW. The interval 75–114 is RNA-binding; the sequence is GEREWHLGQGVSIEWRQGRYRTQIDPGLADQLIHIYYFDC. Thr-96 is modified (phosphothreonine; by host MAP4K1). His-108, Cys-114, Cys-133, and His-139 together coordinate Zn(2+). Residues 108 to 139 carry the HCCH motif motif; sequence HIYYFDCFSESAIRKAILGHKISPRCNYQAGH. Phosphoserine; by host is present on Ser-144. The short motif at 144–153 is the BC-box-like motif element; that stretch reads SLQYLALTAL. Residues 151-164 form a multimerization region; that stretch reads TALIAPKKTKPPLP. The segment at 151–180 is SOCS box-like; the sequence is TALIAPKKTKPPLPSVQKLVEDRWNKPQKT. The segment at 164 to 192 is disordered; it reads PSVQKLVEDRWNKPQKTRGHRESHTMNGH. Ser-165 is subject to Phosphoserine; by host MAP4K1. The tract at residues 171–172 is membrane association; sequence ED. Residues 183-192 show a composition bias toward basic and acidic residues; it reads HRESHTMNGH. Thr-188 carries the phosphothreonine; by host modification.

The protein belongs to the primate lentivirus group Vif protein family. In terms of assembly, homomultimer; in vitro and presumably in vivo. Interacts with viral RNA and Pr55Gag precursor; these interactions mediate Vif incorporation into the virion. Interacts with the viral reverse transcriptase. Forms cullin-5-RING E3 ubiquitin-protein ligase complex (ECS complex) by interacting with host CUL5, RBX2, elongin BC complex (ELOB and ELOC) and CBFB/CBF-beta. Within the ECS complex, Vif interacts directly with host CUL5, ELOC and APOBEC (APOBEC3F and APOBEC3G) substrates. The ECS complex also contains some single-stranded RNA (ssRNA) that acts as a glue that bridges Vif with APOBEC (APOBEC3F and APOBEC3G) substrates. Interacts with host UBCE7IP1 isoform 3/ZIN and possibly with SAT. Interacts with host tyrosine kinases HCK and FYN; these interactions may decrease level of phosphorylated APOBEC3G incorporation into virions. Interacts with host ABCE1; this interaction may play a role in protecting viral RNA from damage during viral assembly. Interacts with host MDM2; this interaction targets Vif for degradation by the proteasome. In terms of processing, processed in virion by the viral protease. Highly phosphorylated on serine and threonine residues. Post-translationally, polyubiquitinated and degraded by the proteasome in the presence of APOBEC3G.

The protein localises to the host cytoplasm. It localises to the host cell membrane. It is found in the virion. In terms of biological role, counteracts the innate antiviral activity of host APOBEC3F and APOBEC3G by promoting their ubiquitination and degradation. Acts as a substrate recognition component of an E3 ubiquitin-protein ligase complex: mechanistically, Vif hijacks a host cullin-5-RING E3 ubiquitin-protein ligase complex (ECS complex) and the transcription coactivator CBFB/CBF-beta to form an active E3 ubiquitin-protein ligase complex that targets APOBEC3G and APOBEC3F for polyubiquitination, leading to their degradation by the proteasome. Vif interaction with APOBEC3G also blocks its cytidine deaminase activity in a proteasome-independent manner, suggesting a dual inhibitory mechanism. May interact directly with APOBEC3G mRNA in order to inhibit its translation. Association with CBFB/CBF-beta also inhibits the transcription coactivator activity of CBFB/CBF-beta. Seems to play a role in viral morphology by affecting the stability of the viral nucleoprotein core. Finally, Vif also contributes to the G2 cell cycle arrest observed in HIV infected cells. This is Virion infectivity factor from Homo sapiens (Human).